The primary structure comprises 188 residues: Adenylate kinase (188 aa).

12–17 serves as a coordination point for ATP; sequence GSGKTT. Residues 33 to 62 are NMP; it reads STGDLLRAEVASGSELGKKIDSFISKGNLV. AMP contacts are provided by residues threonine 34, arginine 39, 60–62, 87–90, and glutamine 94; these read NLV and GYPR. The interval 129-135 is LID; sequence GRARGAD. Arginine 130 provides a ligand contact to ATP. Residues arginine 132 and arginine 144 each coordinate AMP. ATP is bound at residue arginine 172.

This sequence belongs to the adenylate kinase family. Monomer.

The protein localises to the cytoplasm. The catalysed reaction is AMP + ATP = 2 ADP. It participates in purine metabolism; AMP biosynthesis via salvage pathway; AMP from ADP: step 1/1. In terms of biological role, catalyzes the reversible transfer of the terminal phosphate group between ATP and AMP. Plays an important role in cellular energy homeostasis and in adenine nucleotide metabolism. The sequence is that of Adenylate kinase from Campylobacter curvus (strain 525.92).